We begin with the raw amino-acid sequence, 256 residues long: Ribosomal RNA small subunit methyltransferase J (256 aa).

S-adenosyl-L-methionine is bound by residues 104–105, 120–121, 156–157, and Asp174; these read RD, ER, and SS.

The protein belongs to the methyltransferase superfamily. RsmJ family.

It localises to the cytoplasm. The enzyme catalyses guanosine(1516) in 16S rRNA + S-adenosyl-L-methionine = N(2)-methylguanosine(1516) in 16S rRNA + S-adenosyl-L-homocysteine + H(+). In terms of biological role, specifically methylates the guanosine in position 1516 of 16S rRNA. This is Ribosomal RNA small subunit methyltransferase J from Yersinia pseudotuberculosis serotype O:3 (strain YPIII).